The sequence spans 417 residues: DNA-directed RNA polymerase subunit beta (417 aa).

The protein belongs to the RNA polymerase beta chain family. As to quaternary structure, in plastids the minimal PEP RNA polymerase catalytic core is composed of four subunits: alpha, beta, beta', and beta''. When a (nuclear-encoded) sigma factor is associated with the core the holoenzyme is formed, which can initiate transcription.

The protein resides in the plastid. Its subcellular location is the chloroplast. It catalyses the reaction RNA(n) + a ribonucleoside 5'-triphosphate = RNA(n+1) + diphosphate. Functionally, DNA-dependent RNA polymerase catalyzes the transcription of DNA into RNA using the four ribonucleoside triphosphates as substrates. This chain is DNA-directed RNA polymerase subunit beta (rpoB), found in Saponaria officinalis (Common soapwort).